Here is a 448-residue protein sequence, read N- to C-terminus: Adenylosuccinate synthetase (448 aa).

GTP-binding positions include 36 to 42 (GDEGKGK) and 64 to 66 (GHT). The Proton acceptor role is filled by D37. D37 and G64 together coordinate Mg(2+). IMP-binding positions include 37–40 (DEGK), 62–65 (NAGH), T154, R168, N246, T261, and R325. H65 functions as the Proton donor in the catalytic mechanism. 321–327 (VTTKRKR) serves as a coordination point for substrate. Residues R327, 353–355 (KLD), and 436–438 (GVG) each bind GTP.

It belongs to the adenylosuccinate synthetase family. Homodimer. Mg(2+) serves as cofactor.

Its subcellular location is the cytoplasm. The enzyme catalyses IMP + L-aspartate + GTP = N(6)-(1,2-dicarboxyethyl)-AMP + GDP + phosphate + 2 H(+). The protein operates within purine metabolism; AMP biosynthesis via de novo pathway; AMP from IMP: step 1/2. Its function is as follows. Plays an important role in the de novo pathway and in the salvage pathway of purine nucleotide biosynthesis. Catalyzes the first committed step in the biosynthesis of AMP from IMP. The sequence is that of Adenylosuccinate synthetase from Drosophila ananassae (Fruit fly).